The following is a 60-amino-acid chain: Large ribosomal subunit protein bL32 (60 aa).

Residues 1 to 16 show a composition bias toward basic residues; the sequence is MAVPKRKTSPSKRGMR. Residues 1–60 form a disordered region; sequence MAVPKRKTSPSKRGMRRSADALKAPTYVEDKNSGELRRPHHVDLKTGMYRGRQVLEPKEA. Residues 28–44 are compositionally biased toward basic and acidic residues; sequence VEDKNSGELRRPHHVDL.

This sequence belongs to the bacterial ribosomal protein bL32 family.

The protein is Large ribosomal subunit protein bL32 of Chelativorans sp. (strain BNC1).